A 154-amino-acid chain; its full sequence is Major allergen Api g 1, isoallergen 1 (154 aa).

Belongs to the BetVI family.

In Apium graveolens (Celery), this protein is Major allergen Api g 1, isoallergen 1.